Consider the following 291-residue polypeptide: MFLAPDNAVKQLFRSLSPSWMAKLSLSYERTPIGTVLKKSLHEGPLRVQKALYPEGDDICHTVIIHPPAGIAGGDTLDIQVAVGKGSHVVLSTPSATKWYKSFKNPATQNVQFELGENAKLDWLPQENLFFKGANSNLITKLNLPASASFIGWDALMLGRHASGEEWSSGHIHLLNEIRRDGQLIWIENGHIDAEDPYSKSLPQLGSWPVCATLLALGPQCSNHLAENLSEMMPWTNSIRAGVTLMPQGIVIVRAVSIDIEMARNFMIDVWSKLRPIIHGVPAQPLRLWAS.

The protein belongs to the UreD family. In terms of assembly, ureD, UreF and UreG form a complex that acts as a GTP-hydrolysis-dependent molecular chaperone, activating the urease apoprotein by helping to assemble the nickel containing metallocenter of UreC. The UreE protein probably delivers the nickel.

It is found in the cytoplasm. Functionally, required for maturation of urease via the functional incorporation of the urease nickel metallocenter. In Polynucleobacter asymbioticus (strain DSM 18221 / CIP 109841 / QLW-P1DMWA-1) (Polynucleobacter necessarius subsp. asymbioticus), this protein is Urease accessory protein UreD.